The sequence spans 87 residues: Putative acyl-CoA-binding protein (87 aa).

An ACB domain is found at 1–86 (MSSTFEQAAA…VDELKTKYGM (86 aa)). An acyl-CoA is bound by residues K13, 28-32 (YALFK), K50, K54, and Y73.

It belongs to the ACBP family.

The protein localises to the cytoplasm. The protein resides in the nucleus. In terms of biological role, binds medium- and long-chain acyl-CoA esters with very high affinity and may function as an intracellular carrier of acyl-CoA esters. May enhance the activity of the ceramide synthase complex. The polypeptide is Putative acyl-CoA-binding protein (Schizosaccharomyces pombe (strain 972 / ATCC 24843) (Fission yeast)).